A 601-amino-acid chain; its full sequence is Glutathione-regulated potassium-efflux system protein KefB (601 aa).

Helical transmembrane passes span 4-24, 29-49, 55-75, 87-107, 115-135, 152-172, 177-197, 207-227, 230-250, 268-288, 291-311, 326-346, and 356-376; these read SDLLLAGVLFLFAAVIAVPLA, IGAVLGYLLAGIAIGPWGLGF, EILHFSELGVVFLMFIIGLEL, IFGVGAAQVMLSAAILGGLLM, AAVVGGIGLAMSSTAMALQLM, VLLFQDLAVIPALALVPLLAG, HVNWLTVGMKVLAFAGMLIGG, FIASSGVREVFTAATLLLVLG, LFMEALGLSMALGTFIAGVLL, GLLLGLFFISVGMALNLGVLY, LLWVAVSVAVLVAVKMLVLYL, FAGVLSQGGEFAFVLFSLPAS, and ALLLVAVTLSMMTTPLLMKGI. One can recognise an RCK N-terminal domain in the interval 400 to 519; it reads KPQVIIVGFG…AGVTQFSRET (120 aa).

The protein belongs to the monovalent cation:proton antiporter 2 (CPA2) transporter (TC 2.A.37) family. KefB subfamily. In terms of assembly, interacts with the regulatory subunit KefG.

It is found in the cell inner membrane. Pore-forming subunit of a potassium efflux system that confers protection against electrophiles. Catalyzes K(+)/H(+) antiport. The protein is Glutathione-regulated potassium-efflux system protein KefB of Klebsiella pneumoniae (strain 342).